We begin with the raw amino-acid sequence, 455 residues long: Serine--tRNA ligase (455 aa).

252 to 254 (TSE) lines the L-serine pocket. ATP contacts are provided by residues 283–285 (RKE) and Val299. Glu306 is a binding site for L-serine. 370–373 (EVVS) is a binding site for ATP. Thr406 lines the L-serine pocket.

Belongs to the class-II aminoacyl-tRNA synthetase family. Type-1 seryl-tRNA synthetase subfamily. As to quaternary structure, homodimer. The tRNA molecule binds across the dimer.

The protein localises to the cytoplasm. The enzyme catalyses tRNA(Ser) + L-serine + ATP = L-seryl-tRNA(Ser) + AMP + diphosphate + H(+). It carries out the reaction tRNA(Sec) + L-serine + ATP = L-seryl-tRNA(Sec) + AMP + diphosphate + H(+). It functions in the pathway aminoacyl-tRNA biosynthesis; selenocysteinyl-tRNA(Sec) biosynthesis; L-seryl-tRNA(Sec) from L-serine and tRNA(Sec): step 1/1. In terms of biological role, catalyzes the attachment of serine to tRNA(Ser). Is also able to aminoacylate tRNA(Sec) with serine, to form the misacylated tRNA L-seryl-tRNA(Sec), which will be further converted into selenocysteinyl-tRNA(Sec). The protein is Serine--tRNA ligase of Thermococcus sibiricus (strain DSM 12597 / MM 739).